The sequence spans 199 residues: 3-isopropylmalate dehydratase small subunit (199 aa).

This sequence belongs to the LeuD family. LeuD type 1 subfamily. In terms of assembly, heterodimer of LeuC and LeuD.

It catalyses the reaction (2R,3S)-3-isopropylmalate = (2S)-2-isopropylmalate. Its pathway is amino-acid biosynthesis; L-leucine biosynthesis; L-leucine from 3-methyl-2-oxobutanoate: step 2/4. Functionally, catalyzes the isomerization between 2-isopropylmalate and 3-isopropylmalate, via the formation of 2-isopropylmaleate. In Pseudoalteromonas translucida (strain TAC 125), this protein is 3-isopropylmalate dehydratase small subunit.